Reading from the N-terminus, the 343-residue chain is Peptide methionine sulfoxide reductase msrA/msrB (343 aa).

The segment at 21 to 174 (KVIYLAGGCF…PNGYCHIDLK (154 aa)) is peptide methionine sulfoxide reductase A. Cys29 serves as the catalytic Cysteine sulfenic acid (-SOH) intermediate. Positions 191–314 (DEVLKKKLTQ…NSASLRFIPL (124 aa)) constitute a MsrB domain. Cys303 (nucleophile) is an active-site residue.

In the N-terminal section; belongs to the MsrA Met sulfoxide reductase family. This sequence in the C-terminal section; belongs to the MsrB Met sulfoxide reductase family.

The catalysed reaction is L-methionyl-[protein] + [thioredoxin]-disulfide + H2O = L-methionyl-(S)-S-oxide-[protein] + [thioredoxin]-dithiol. It catalyses the reaction [thioredoxin]-disulfide + L-methionine + H2O = L-methionine (S)-S-oxide + [thioredoxin]-dithiol. It carries out the reaction L-methionyl-[protein] + [thioredoxin]-disulfide + H2O = L-methionyl-(R)-S-oxide-[protein] + [thioredoxin]-dithiol. Has an important function as a repair enzyme for proteins that have been inactivated by oxidation. Catalyzes the reversible oxidation-reduction of methionine sulfoxide in proteins to methionine. The polypeptide is Peptide methionine sulfoxide reductase msrA/msrB (Enterococcus faecalis (Streptococcus faecalis)).